The primary structure comprises 391 residues: MKCLVTGGNVKVLGKAVHSLSRIGDELYLEPLEDGLSLRTVNSSRSAYACFLFAPLFFQQYQAATPGQDLLRCKILMKSFLSVFRSLAMLEKTVEKCCISLNGRSSRLVVQLHCKFGVRKTHNLSFQDCESLQAVFDPASCPHMLRAPARVLGEAVLPFSPALAEVTLGIGRGRRVILRSYHEEEADSTAKAMVTEMCLGEEDFQQLQAQEGVAITFCLKEFRGLLSFAESANLNLSIHFDAPGRPAIFTIKDSLLDGHFVLATLSDTDSHSQDLGSPERHQPVPQLQAHSTPHPDDFANDDIDSYMIAMETTIGNEGSRVLPSISLSPGPQPPKSPGPHSEEEDEAEPSTVPGTPPPKKFRSLFFGSILAPVRSPQGPSPVLAEDSEGEG.

Position 28 is a phosphotyrosine (tyrosine 28). Positions 51–91 are possesses 3'-5' exonuclease activity; that stretch reads FLFAPLFFQQYQAATPGQDLLRCKILMKSFLSVFRSLAMLE. A sufficient for interaction with ABL1 region spans residues 266-391; the sequence is SDTDSHSQDL…VLAEDSEGEG (126 aa). The segment covering 268 to 282 has biased composition (basic and acidic residues); that stretch reads TDSHSQDLGSPERHQ. 2 disordered regions span residues 268-301 and 319-391; these read TDSH…FAND and SRVL…EGEG. 3 positions are modified to phosphoserine: serine 272, serine 277, and serine 328. Serine 341 carries the phosphoserine; by CK2 modification. Residues serine 375 and serine 380 each carry the phosphoserine modification. Serine 387 carries the post-translational modification Phosphoserine; by CK2.

The protein belongs to the rad9 family. Component of the toroidal 9-1-1 (RAD9-RAD1-HUS1) complex, composed of RAD9A, RAD1 and HUS1. The 9-1-1 complex associates with LIG1, POLB, FEN1, RAD17, HDAC1, RPA1 and RPA2. The 9-1-1 complex associates with the RAD17-RFC complex. RAD9A interacts with BCL2L1, FEN1, RAD9B, ABL1, RPA1, ATAD5 and RPA2. Interacts with DNAJC7. Interacts (when phosphorylated) with TOPBP1. Constitutively phosphorylated on serine and threonine amino acids in absence of DNA damage. Hyperphosphorylated by PRKCD and ABL1 upon DNA damage. Its phosphorylation by PRKCD may be required for the formation of the 9-1-1 complex. Phosphorylated at Ser-341 and Ser-387 by CK2, promoting interaction with TOPBP1.

The protein resides in the nucleus. It carries out the reaction Exonucleolytic cleavage in the 3'- to 5'-direction to yield nucleoside 5'-phosphates.. Its function is as follows. Component of the 9-1-1 cell-cycle checkpoint response complex that plays a major role in DNA repair. The 9-1-1 complex is recruited to DNA lesion upon damage by the RAD17-replication factor C (RFC) clamp loader complex. Acts then as a sliding clamp platform on DNA for several proteins involved in long-patch base excision repair (LP-BER). The 9-1-1 complex stimulates DNA polymerase beta (POLB) activity by increasing its affinity for the 3'-OH end of the primer-template and stabilizes POLB to those sites where LP-BER proceeds; endonuclease FEN1 cleavage activity on substrates with double, nick, or gap flaps of distinct sequences and lengths; and DNA ligase I (LIG1) on long-patch base excision repair substrates. The 9-1-1 complex is necessary for the recruitment of RHNO1 to sites of double-stranded breaks (DSB) occurring during the S phase. RAD9A possesses 3'-&gt;5' double stranded DNA exonuclease activity. In Homo sapiens (Human), this protein is Cell cycle checkpoint control protein RAD9A (RAD9A).